A 212-amino-acid chain; its full sequence is Probable GTP-binding protein EngB (212 aa).

An EngB-type G domain is found at 40–212 (SLPEIAFVGK…KASLAKCIKA (173 aa)). Residues 48-55 (GKSNVGKS), 75-79 (GRTRQ), 93-96 (DLPG), 160-163 (TKSD), and 191-193 (VSS) each bind GTP. Mg(2+) contacts are provided by Ser-55 and Thr-77.

The protein belongs to the TRAFAC class TrmE-Era-EngA-EngB-Septin-like GTPase superfamily. EngB GTPase family. Mg(2+) serves as cofactor.

Necessary for normal cell division and for the maintenance of normal septation. This chain is Probable GTP-binding protein EngB, found in Rickettsia akari (strain Hartford).